We begin with the raw amino-acid sequence, 892 residues long: Alanine--tRNA ligase (892 aa).

Positions 574, 578, 676, and 680 each coordinate Zn(2+).

The protein belongs to the class-II aminoacyl-tRNA synthetase family. The cofactor is Zn(2+).

It is found in the cytoplasm. It carries out the reaction tRNA(Ala) + L-alanine + ATP = L-alanyl-tRNA(Ala) + AMP + diphosphate. Its function is as follows. Catalyzes the attachment of alanine to tRNA(Ala) in a two-step reaction: alanine is first activated by ATP to form Ala-AMP and then transferred to the acceptor end of tRNA(Ala). Also edits incorrectly charged Ser-tRNA(Ala) and Gly-tRNA(Ala) via its editing domain. This Prochlorococcus marinus (strain MIT 9313) protein is Alanine--tRNA ligase.